The following is a 224-amino-acid chain: Claudin-17 (224 aa).

At 1–7 (MAFYPLQ) the chain is on the cytoplasmic side. The chain crosses the membrane as a helical span at residues 8-28 (IAGLVLGFFGLVGTIGTTLLP). Residues 29-81 (QWRVSAFIGSNIIIFERIWEGLWMNCIQQAMVTLQCKFYNSILALPPVLEAAR) lie on the Extracellular side of the membrane. The chain crosses the membrane as a helical span at residues 82 to 102 (ALMCVAVALALVALIIGICGM). At 103 to 124 (KQLQCTGSSERVKAYLLGTSGV) the chain is on the cytoplasmic side. The chain crosses the membrane as a helical span at residues 125-145 (LFILTGIFVLIPVSWTANIII). The Extracellular portion of the chain corresponds to 146 to 164 (RDFYDPTVHAGQKRELGGA). A helical transmembrane segment spans residues 165-185 (LFLGWATAAVLFIGGGLLCGY). At 186–224 (CCCNRKERWHRYPVPAYRVPQKDNQRNVTVPRKSSTSYV) the chain is on the cytoplasmic side.

The protein belongs to the claudin family. As to quaternary structure, does not form homotypic polymeric strands and it is not sufficient to form tight junctions by its own. Interacts with OCLN. Expressed at high levels in the kidney and at mucher lower levels in the brain. In the kidney, expression gradually decreases from the proximal tubule downstream to the distal convoluted tubule. Expressed in the thin ascending limb of Henle's loop, as well as in the thick ascending limb of Henle's loop. In the distal convoluted tubules, expressed only in a few tubules. Not detected in the collecting duct. In the brain, expressed in blood vessels (at protein level).

Its subcellular location is the cell junction. The protein localises to the tight junction. It is found in the cell membrane. The enzyme catalyses chloride(in) = chloride(out). It carries out the reaction hydrogencarbonate(in) = hydrogencarbonate(out). The catalysed reaction is bromide(in) = bromide(out). It catalyses the reaction iodide(out) = iodide(in). The enzyme catalyses fluoride(in) = fluoride(out). It carries out the reaction nitrate(in) = nitrate(out). The catalysed reaction is thiocyanate(in) = thiocyanate(out). Functionally, channel-forming tight junction protein with selectivity for anions, including chloride and hydrogencarbonate, and for solutes smaller than 9 Angstrom in diameter. In the kidney proximal tubule, may be involved in quantitative reabsorption of filtered anions. Does not affect water permeability. This is Claudin-17 (Cldn17) from Mus musculus (Mouse).